A 2377-amino-acid polypeptide reads, in one-letter code: Serine/threonine-protein kinase WNK1 (2377 aa).

Disordered regions lie at residues 1–79 and 93–203; these read MSDG…RFFR and LPGL…QQDD. Threonine 17 and threonine 58 each carry phosphothreonine. The span at 48–64 shows a compositional bias: basic and acidic residues; it reads RTEEYRRRRHTMDKDSR. 2 stretches are compositionally biased toward low complexity: residues 101–111 and 127–141; these read PQPSVPAVVPQ and VASQVSQQPSAAASP. Residues 149 to 158 show a composition bias toward polar residues; the sequence is SATTTVPSST. Phosphoserine occurs at positions 165 and 172. The Protein kinase domain occupies 221 to 479; that stretch reads LKFDIEIGRG…IKDLLNHAFF (259 aa). Position 231 (serine 231) interacts with ATP. Chloride contacts are provided by phenylalanine 283 and leucine 299. ATP contacts are provided by residues 301 to 304 and lysine 351; that span reads TELM. Aspartate 368 functions as the Proton acceptor in the catalytic mechanism. The chloride site is built by leucine 369 and leucine 371. 2 positions are modified to phosphoserine; by autocatalysis: serine 378 and serine 382. Positions 488–555 are autoinhibitory domain; the sequence is ELAEEDDGEK…VCEGDHKTMA (68 aa). Residues 573–588 are compositionally biased toward basic and acidic residues; that stretch reads QLVREEQEKRKQEESS. Disordered stretches follow at residues 573–782 and 1013–1114; these read QLVR…SAGT and PAVS…SRPK. Composition is skewed to polar residues over residues 593–628, 638–705, and 713–733; these read NEQQASVSQAGIQQLSAASTGIPTAPATSASVSTQV, HQQL…QSQP, and SMAQGQNQGQPSSSLAGVLSS. The tract at residues 629–639 is interaction with KLHL3; sequence EPEEPEADQHQ. Positions 734 to 746 are enriched in low complexity; that stretch reads QPIQHPQQQGIQP. Residues 747-782 show a composition bias toward polar residues; sequence TVPSQQAVQYSLPQAASSSEGTTAQPVSQPQVSAGT. A compositionally biased stretch (low complexity) spans 1018–1028; that stretch reads TQQPPTTSSQQ. The segment covering 1029–1038 has biased composition (polar residues); that stretch reads AVLESTQGVS. Residues 1042-1058 are compositionally biased toward low complexity; sequence PPEQTPITQSQPTQPVP. A compositionally biased stretch (polar residues) spans 1075 to 1085; that stretch reads SDGNENAPSSS. Residues 1093-1114 are compositionally biased toward basic residues; it reads TKRHYRKSVRSRSRHEKTSRPK. The RFXV motif 1 signature appears at 1252-1255; the sequence is RFIV. Serine 1256 is subject to Phosphoserine. Disordered stretches follow at residues 1726-1760 and 1818-1847; these read GQVSTPGTHASAPVGTATGVKPGTTPPKPTKTVVP and TMSSTTVTEAGTRLQKDGTEGHVTATSSGA. Over residues 1738–1748 the composition is skewed to low complexity; the sequence is PVGTATGVKPG. At threonine 1843 the chain carries Phosphothreonine. Residues 1854-1857 carry the RFXV motif 2 motif; the sequence is RFQV. The tract at residues 1860–1945 is disordered; sequence TMDDAQKERK…TKVGRFQVTT (86 aa). The segment covering 1863–1879 has biased composition (basic and acidic residues); that stretch reads DAQKERKNRSEDTKSVH. The span at 1882 to 1900 shows a compositional bias: low complexity; sequence SSTSESSVLSSSSPESTLV. 2 short sequence motifs (RFXV motif) span residues 1940–1943 and 1952–1955; these read RFQV and RFSV. Residues 1959–1969 are compositionally biased toward basic and acidic residues; the sequence is EDKVTELKKEG. 5 disordered regions span residues 1959–1984, 1989–2008, 2015–2064, 2107–2191, and 2203–2239; these read EDKVTELKKEGPVTSPPFRDSEQTVI, PKKEKPELAEPSHLNGPSSD, SRGT…DIED, VIIP…NLYS, and SLSAPGQGTSSTNTVGGTVSSQAAQAQPPAMTSSRKG. Phosphoserine is present on serine 1973. Residues 1989–1998 show a composition bias toward basic and acidic residues; it reads PKKEKPELAE. Serine 2006, serine 2007, serine 2022, serine 2024, and serine 2027 each carry phosphoserine. Low complexity predominate over residues 2035-2057; it reads SLPVQNLSQSLSNSFNSSYMSSD. Serine 2116 bears the Phosphoserine mark. A compositionally biased stretch (basic residues) spans 2117–2129; that stretch reads GRRRRPTKSKGSK. Positions 2130-2140 are enriched in low complexity; it reads SSRSSSLGNKS. Polar residues predominate over residues 2141–2191; sequence PQLSGNLSGQSGTSVLHPQQTLHPAGNTPETGHNQLLQPLKPSPSSDNLYS. A compositionally biased stretch (low complexity) spans 2208 to 2232; the sequence is GQGTSSTNTVGGTVSSQAAQAQPPA. The amphipathic alpha-helix stretch occupies residues 2236 to 2256; sequence SRKGTFTDDLHKLVDNWARDA. Serine 2265 and serine 2281 each carry phosphoserine. Residues 2325–2344 are disordered; sequence PAPFGTQWSGTGGPAPQPLG. Serine 2365 and serine 2367 each carry phosphoserine.

The protein belongs to the protein kinase superfamily. Ser/Thr protein kinase family. WNK subfamily. As to quaternary structure, interacts with WNK3. Interacts with WNK4; inhibiting the activity of WNK4. Interacts with SGK1; promoting its activation. Associates with the mTORC2 complex. Interacts with UVRAG. Interacts with isoform 1; inhibiting isoform 1 activity. It depends on Mg(2+) as a cofactor. Post-translationally, autophosphorylated at Ser-378 and Ser-382, promoting its activity. Autophosphorylation at Ser-382 is inhibited by intracellular calcium. Phosphorylation at Thr-58 increases ability to activate SGK1. Ubiquitinated by the BCR(KLHL3) complex, leading to its degradation. Also ubiquitinated by the BCR(KLHL2) complex. In terms of processing, may be O-glycosylated. In terms of tissue distribution, widely expressed in both adult and embryonic tissue, with highest levels observed in the testis and lower levels in heart, lung, kidney, placenta, brain and skeletal muscle. Expressed in pancreatic duct. Two isoforms are expressed in heart, a single shorter isoform in the kidney. Locates to the distal convoluted tubule, the medullary collecting duct and the cortical collecting duct of the kidney. As to expression, restricted to the nervous system, expressed preferentially in sensory neurons than in motor neurons and in general more abundant in axons than in cell bodies (at protein level). In the DRG, predominantly expressed in the satellite cells that envelop sensory neurons, but low expression also observed in the cell bodies of neurons (at protein level). In the sciatic nerve, expressed in the Schwann cells that surround axons and in a mosaic distribution of axons (at protein level). In the spinal cord, expressed in superficial layers (LI and LII), as well as in the fibers of the Lissauer tract (at protein level). Also detected in the axon fibers of dorsolateral funiculus and lateral funiculus (at protein level).

The protein resides in the cytoplasm. It is found in the nucleus. Its subcellular location is the cytoskeleton. It localises to the spindle. It carries out the reaction L-seryl-[protein] + ATP = O-phospho-L-seryl-[protein] + ADP + H(+). It catalyses the reaction L-threonyl-[protein] + ATP = O-phospho-L-threonyl-[protein] + ADP + H(+). With respect to regulation, activated in response to hyperosmotic stress: cell shrinkage promotes formation of a membraneless compartment that concentrates WNK1 with its substrates, OXSR1/OSR1 and STK39/SPAK. Activation requires autophosphorylation of Ser-382 and, to a lower extent, Ser-378. Autophosphorylation and subsequent activation is inhibited by increases in intracellular ionic strength: Cl(-) potently inhibits WNK1 kinase activity via direct binding. Also inhibited by K(+) ions. Its function is as follows. Serine/threonine-protein kinase component of the WNK1-SPAK/OSR1 kinase cascade, which acts as a key regulator of blood pressure and regulatory volume increase by promoting ion influx. WNK1 mediates regulatory volume increase in response to hyperosmotic stress by acting as a molecular crowding sensor, which senses cell shrinkage and mediates formation of a membraneless compartment by undergoing liquid-liquid phase separation. The membraneless compartment concentrates WNK1 with its substrates, OXSR1/OSR1 and STK39/SPAK, promoting WNK1-dependent phosphorylation and activation of downstream kinases OXSR1/OSR1 and STK39/SPAK. Following activation, OXSR1/OSR1 and STK39/SPAK catalyze phosphorylation of ion cotransporters SLC12A1/NKCC2, SLC12A2/NKCC1, SLC12A5/KCC2 and SLC12A6/KCC3, regulating their activity. Phosphorylation of Na-K-Cl cotransporters SLC12A2/NKCC1 and SLC12A2/NKCC1 promote their activation and ion influx; simultaneously, phosphorylation of K-Cl cotransporters SLC12A5/KCC2 and SLC12A6/KCC3 inhibit their activity, blocking ion efflux. Also acts as a regulator of angiogenesis in endothelial cells. Also acts independently of the WNK1-SPAK/OSR1 kinase cascade by catalyzing phosphorylation of other substrates, such as SYT2, PCF11 and NEDD4L. Mediates phosphorylation of SYT2, regulating SYT2 association with phospholipids and membrane-binding. Regulates mRNA export in the nucleus by mediating phosphorylation of PCF11, thereby decreasing the association between PCF11 and POLR2A/RNA polymerase II and promoting mRNA export to the cytoplasm. Acts as a negative regulator of autophagy. Required for the abscission step during mitosis, independently of the WNK1-SPAK/OSR1 kinase cascade. WNK1 may also play a role in actin cytoskeletal reorganization. Also acts as a scaffold protein independently of its protein kinase activity: negatively regulates cell membrane localization of various transporters and channels, such as SLC4A4, SLC26A6, SLC26A9, TRPV4 and CFTR. Involved in the regulation of epithelial Na(+) channel (ENaC) by promoting activation of SGK1 in a kinase-independent manner: probably acts as a scaffold protein that promotes the recruitment of SGK1 to the mTORC2 complex in response to chloride, leading to mTORC2-dependent phosphorylation and activation of SGK1. Acts as an assembly factor for the ER membrane protein complex independently of its protein kinase activity: associates with EMC2 in the cytoplasm via its amphipathic alpha-helix, and prevents EMC2 ubiquitination and subsequent degradation, thereby promoting EMC2 stabilization. In terms of biological role, kinase-defective isoform specifically expressed in kidney, which acts as a dominant-negative regulator of the longer isoform 1. Does not directly inhibit WNK4 and has no direct effect on sodium and chloride ion transport. Down-regulates sodium-chloride cotransporter activity indirectly by inhibiting isoform 1, it associates with isoform 1 and attenuates its kinase activity. In kidney, may play an important role regulating sodium and potassium balance. The chain is Serine/threonine-protein kinase WNK1 from Mus musculus (Mouse).